A 647-amino-acid chain; its full sequence is MAGAPLIRLEDICKTFHNGDLAVEVLHGITLDIRAGEFVAIMGASGSGKSTLMNILGCLDTPTGGRYLLDGEDVSTLNADELATLRRRTFGFVFQSYNLIPTSTAQENVEVPAIYAGTPAAERRKRAAALLNALKLGDRLDHRPSQLSGGQQQRVSIARALMNGGRIILADEPTGALDSQSGEDVMELLRSMHQQGHTVIVITHAREVAERADRLIEIRDGQILSDTTKRDIHTPEATLQPHEEIAGNGAHIADISEAVKMALRALRANIFRTVLTLLGIIIGVSSVVTMLAIGTGAQNTILDRINAMGTDLILVRPAMAGFRGSGSIATLVPQDADAILELPNVKSAVPEVTGTVTLRRGNVDYQSQANGTVPAFSLSEIVESRQRQLHHPERYRYLRPCGWLGTTVVKTLFPDGSNPVGDYILIQKIPFQIIGTLEPKGAGFGGSDQDDVVVVPLSTGNLRLFGQKYVRSITVQVKDSSLIDTTQNQIQSLLDQRHKKRDTMITNMSSVREDAAAMGKTMTVFLGSVAAISLLVGGIGVMNIMLVSVTERTREIGVRMATGARRRDILLQFIIEALSVSAIGGAIGVILGLGAAALASWAGLSVGYSFGPVLLAFACAFATGLIFGFLPARKASRLLPAVALSSE.

Residues 7–245 (IRLEDICKTF…EATLQPHEEI (239 aa)) form the ABC transporter domain. An ATP-binding site is contributed by 43–50 (GASGSGKS). 4 helical membrane passes run 274–294 (VLTLLGIIIGVSSVVTMLAIG), 529–549 (VAAISLLVGGIGVMNIMLVSV), 573–593 (FIIEALSVSAIGGAIGVILGL), and 610–630 (FGPVLLAFACAFATGLIFGFL).

It belongs to the ABC transporter superfamily. Macrolide exporter (TC 3.A.1.122) family. As to quaternary structure, homodimer.

It localises to the cell inner membrane. Non-canonical ABC transporter that contains transmembrane domains (TMD), which form a pore in the inner membrane, and an ATP-binding domain (NBD), which is responsible for energy generation. Confers resistance against macrolides. The polypeptide is Macrolide export ATP-binding/permease protein MacB (Brucella melitensis biotype 1 (strain ATCC 23456 / CCUG 17765 / NCTC 10094 / 16M)).